The sequence spans 858 residues: Alanine--tRNA ligase (858 aa).

Zn(2+) contacts are provided by histidine 550, histidine 554, cysteine 652, and histidine 656.

This sequence belongs to the class-II aminoacyl-tRNA synthetase family. The cofactor is Zn(2+).

It is found in the cytoplasm. It carries out the reaction tRNA(Ala) + L-alanine + ATP = L-alanyl-tRNA(Ala) + AMP + diphosphate. Its function is as follows. Catalyzes the attachment of alanine to tRNA(Ala) in a two-step reaction: alanine is first activated by ATP to form Ala-AMP and then transferred to the acceptor end of tRNA(Ala). Also edits incorrectly charged Ser-tRNA(Ala) and Gly-tRNA(Ala) via its editing domain. The chain is Alanine--tRNA ligase from Pseudothermotoga lettingae (strain ATCC BAA-301 / DSM 14385 / NBRC 107922 / TMO) (Thermotoga lettingae).